A 95-amino-acid chain; its full sequence is Small ribosomal subunit protein bS6 (95 aa).

This sequence belongs to the bacterial ribosomal protein bS6 family.

In terms of biological role, binds together with bS18 to 16S ribosomal RNA. The protein is Small ribosomal subunit protein bS6 of Desulfitobacterium hafniense (strain DSM 10664 / DCB-2).